We begin with the raw amino-acid sequence, 102 residues long: Large ribosomal subunit protein uL24 (102 aa).

It belongs to the universal ribosomal protein uL24 family. Part of the 50S ribosomal subunit.

One of two assembly initiator proteins, it binds directly to the 5'-end of the 23S rRNA, where it nucleates assembly of the 50S subunit. Its function is as follows. One of the proteins that surrounds the polypeptide exit tunnel on the outside of the subunit. In Cupriavidus pinatubonensis (strain JMP 134 / LMG 1197) (Cupriavidus necator (strain JMP 134)), this protein is Large ribosomal subunit protein uL24.